Here is a 218-residue protein sequence, read N- to C-terminus: Histone H1 (218 aa).

Over residues 1–19 (MSETAPVAAPAVSAPGAKA) the composition is skewed to low complexity. Disordered stretches follow at residues 1 to 42 (MSET…PSVT) and 89 to 218 (VSKG…TKKK). Ser-2 is modified (N-acetylserine). Residues 37 to 110 (AGPSVTELIT…GASGSFKLNK (74 aa)) form the H15 domain. Composition is skewed to basic residues over residues 118–133 (KATK…KPAA), 141–158 (KKPK…KAKK), 166–184 (KAAK…KKTA), and 191–218 (KAVK…TKKK).

The protein belongs to the histone H1/H5 family.

Its subcellular location is the nucleus. It localises to the chromosome. In terms of biological role, histones H1 are necessary for the condensation of nucleosome chains into higher-order structures. In Gallus gallus (Chicken), this protein is Histone H1.